The sequence spans 251 residues: Imidazole glycerol phosphate synthase subunit HisF (251 aa).

Catalysis depends on residues aspartate 13 and aspartate 132.

It belongs to the HisA/HisF family. In terms of assembly, heterodimer of HisH and HisF.

The protein resides in the cytoplasm. It carries out the reaction 5-[(5-phospho-1-deoxy-D-ribulos-1-ylimino)methylamino]-1-(5-phospho-beta-D-ribosyl)imidazole-4-carboxamide + L-glutamine = D-erythro-1-(imidazol-4-yl)glycerol 3-phosphate + 5-amino-1-(5-phospho-beta-D-ribosyl)imidazole-4-carboxamide + L-glutamate + H(+). Its pathway is amino-acid biosynthesis; L-histidine biosynthesis; L-histidine from 5-phospho-alpha-D-ribose 1-diphosphate: step 5/9. In terms of biological role, IGPS catalyzes the conversion of PRFAR and glutamine to IGP, AICAR and glutamate. The HisF subunit catalyzes the cyclization activity that produces IGP and AICAR from PRFAR using the ammonia provided by the HisH subunit. The protein is Imidazole glycerol phosphate synthase subunit HisF of Campylobacter concisus (strain 13826).